The following is a 227-amino-acid chain: PKHD-type hydroxylase Bamb_4192 (227 aa).

Positions 78-178 constitute a Fe2OG dioxygenase domain; sequence KVFPPLFNRY…RVASFFWIQS (101 aa). His-96, Asp-98, and His-159 together coordinate Fe cation. Arg-169 serves as a coordination point for 2-oxoglutarate.

Fe(2+) serves as cofactor. Requires L-ascorbate as cofactor.

The polypeptide is PKHD-type hydroxylase Bamb_4192 (Burkholderia ambifaria (strain ATCC BAA-244 / DSM 16087 / CCUG 44356 / LMG 19182 / AMMD) (Burkholderia cepacia (strain AMMD))).